The following is a 1072-amino-acid chain: Carbamoyl phosphate synthase large chain (1072 aa).

A carboxyphosphate synthetic domain region spans residues 1-401 (MPKRLDINTI…SLLKAVRSLE (401 aa)). ATP is bound by residues arginine 129, arginine 169, glycine 175, glycine 176, lysine 208, isoleucine 210, glutamate 215, glycine 241, valine 242, histidine 243, glutamine 284, and glutamate 298. The ATP-grasp 1 domain occupies 133 to 327 (RTLMQELNEP…IAKLAAKIAV (195 aa)). Glutamine 284, glutamate 298, and asparagine 300 together coordinate Mg(2+). The Mn(2+) site is built by glutamine 284, glutamate 298, and asparagine 300. The segment at 402–546 (LGVYHLELEH…YSTYGDENES (145 aa)) is oligomerization domain. The tract at residues 547-929 (VRTDRKSVVV…ALYKGLVASG (383 aa)) is carbamoyl phosphate synthetic domain. The ATP-grasp 2 domain occupies 671-861 (EAALTQLGIP…MANVATKVIL (191 aa)). ATP-binding residues include arginine 707, arginine 746, glutamate 752, glycine 777, valine 778, histidine 779, serine 780, glutamine 820, and glutamate 832. Glutamine 820, glutamate 832, and asparagine 834 together coordinate Mg(2+). Glutamine 820, glutamate 832, and asparagine 834 together coordinate Mn(2+). Residues 930–1072 (INIPTHGSVI…QTKRHEVVHA (143 aa)) enclose the MGS-like domain. An allosteric domain region spans residues 930–1072 (INIPTHGSVI…QTKRHEVVHA (143 aa)).

Belongs to the CarB family. In terms of assembly, composed of two chains; the small (or glutamine) chain promotes the hydrolysis of glutamine to ammonia, which is used by the large (or ammonia) chain to synthesize carbamoyl phosphate. Tetramer of heterodimers (alpha,beta)4. It depends on Mg(2+) as a cofactor. Mn(2+) serves as cofactor.

The enzyme catalyses hydrogencarbonate + L-glutamine + 2 ATP + H2O = carbamoyl phosphate + L-glutamate + 2 ADP + phosphate + 2 H(+). It carries out the reaction hydrogencarbonate + NH4(+) + 2 ATP = carbamoyl phosphate + 2 ADP + phosphate + 2 H(+). Its pathway is amino-acid biosynthesis; L-arginine biosynthesis; carbamoyl phosphate from bicarbonate: step 1/1. It participates in pyrimidine metabolism; UMP biosynthesis via de novo pathway; (S)-dihydroorotate from bicarbonate: step 1/3. In terms of biological role, large subunit of the glutamine-dependent carbamoyl phosphate synthetase (CPSase). CPSase catalyzes the formation of carbamoyl phosphate from the ammonia moiety of glutamine, carbonate, and phosphate donated by ATP, constituting the first step of 2 biosynthetic pathways, one leading to arginine and/or urea and the other to pyrimidine nucleotides. The large subunit (synthetase) binds the substrates ammonia (free or transferred from glutamine from the small subunit), hydrogencarbonate and ATP and carries out an ATP-coupled ligase reaction, activating hydrogencarbonate by forming carboxy phosphate which reacts with ammonia to form carbamoyl phosphate. This Bacillus cereus (strain G9842) protein is Carbamoyl phosphate synthase large chain.